Here is a 482-residue protein sequence, read N- to C-terminus: Cardiolipin synthase (482 aa).

Helical transmembrane passes span 4–24 (LAYL…VTVF) and 34–54 (WAWL…YLIF). PLD phosphodiesterase domains follow at residues 217-244 (LNYR…GDEY) and 395-422 (DNGF…DFRS). Catalysis depends on residues histidine 222, lysine 224, aspartate 229, histidine 400, lysine 402, and aspartate 407.

It belongs to the phospholipase D family. Cardiolipin synthase subfamily.

The protein resides in the cell membrane. It catalyses the reaction 2 a 1,2-diacyl-sn-glycero-3-phospho-(1'-sn-glycerol) = a cardiolipin + glycerol. In terms of biological role, catalyzes the reversible phosphatidyl group transfer from one phosphatidylglycerol molecule to another to form cardiolipin (CL) (diphosphatidylglycerol) and glycerol. The protein is Cardiolipin synthase (cls) of Listeria innocua serovar 6a (strain ATCC BAA-680 / CLIP 11262).